The primary structure comprises 253 residues: DNA repair protein RecO (253 aa).

The protein belongs to the RecO family.

Involved in DNA repair and RecF pathway recombination. This Symbiobacterium thermophilum (strain DSM 24528 / JCM 14929 / IAM 14863 / T) protein is DNA repair protein RecO.